A 258-amino-acid polypeptide reads, in one-letter code: Indole-3-glycerol phosphate synthase (258 aa).

The protein belongs to the TrpC family.

It catalyses the reaction 1-(2-carboxyphenylamino)-1-deoxy-D-ribulose 5-phosphate + H(+) = (1S,2R)-1-C-(indol-3-yl)glycerol 3-phosphate + CO2 + H2O. It participates in amino-acid biosynthesis; L-tryptophan biosynthesis; L-tryptophan from chorismate: step 4/5. This is Indole-3-glycerol phosphate synthase from Geobacillus thermodenitrificans (strain NG80-2).